A 953-amino-acid polypeptide reads, in one-letter code: Coatomer subunit beta (953 aa).

Thr2 is subject to N-acetylthreonine. 6 HEAT repeats span residues 96 to 131 (HEMI…KEAE), 132 to 168 (LLEP…NFEH), 240 to 276 (SERA…SAPT), 277 to 314 (AIKA…HPAH), 316 to 353 (RVLQ…SRNV), and 396 to 433 (DMAA…RFDN). Lys494 carries the post-translational modification N6-acetyllysine.

Oligomeric complex that consists of at least the alpha, beta, beta', gamma, delta, epsilon and zeta subunits. Interacts with CAPN8 and PRKCE. Interacts with SCYL1. Interacts with COPG1. Interacts with ARF1 (myristoylated); this interaction is required for binding of COPB1 to Golgi membranes. Interacts (via trunk domain) with ARF1 (via switch I region); the interaction is direct. Interacts with KCNK2 (via N-terminus); this interaction increases the channel-mediated whole cell currents and promotes plasma membrane expression of KCNK2. Interacts with STX17. Interacts with TMEM115. Interacts with TMEM41B. As to expression, high expression in the lung, kidney, skeletal muscle and small intestine, and lower level of expression in heart, liver, spleen, stomach and fat.

Its subcellular location is the cytoplasm. It localises to the golgi apparatus membrane. The protein localises to the cytoplasmic vesicle. The protein resides in the COPI-coated vesicle membrane. It is found in the cell membrane. Its subcellular location is the endoplasmic reticulum-Golgi intermediate compartment. The coatomer is a cytosolic protein complex that binds to dilysine motifs and reversibly associates with Golgi non-clathrin-coated vesicles, which further mediate biosynthetic protein transport from the ER, via the Golgi up to the trans Golgi network. Coatomer complex is required for budding from Golgi membranes, and is essential for the retrograde Golgi-to-ER transport of dilysine-tagged proteins. In mammals, the coatomer can only be recruited by membranes associated to ADP-ribosylation factors (ARFs), which are small GTP-binding proteins; the complex also influences the Golgi structural integrity, as well as the processing, activity, and endocytic recycling of LDL receptors. Plays a functional role in facilitating the transport of kappa-type opioid receptor mRNAs into axons and enhances translation of these proteins. Required for limiting lipid storage in lipid droplets. Involved in lipid homeostasis by regulating the presence of perilipin family members PLIN2 and PLIN3 at the lipid droplet surface and promoting the association of adipocyte surface triglyceride lipase (PNPLA2) with the lipid droplet to mediate lipolysis. Involved in the Golgi disassembly and reassembly processes during cell cycle. Involved in autophagy by playing a role in early endosome function. Plays a role in organellar compartmentalization of secretory compartments including endoplasmic reticulum (ER)-Golgi intermediate compartment (ERGIC), Golgi, trans-Golgi network (TGN) and recycling endosomes, and in biosynthetic transport of CAV1. This is Coatomer subunit beta from Sus scrofa (Pig).